A 687-amino-acid polypeptide reads, in one-letter code: Ribonuclease E (687 aa).

Positions 35-117 (GDIYLGVVEN…LTGNITLPGR (83 aa)) constitute an S1 motif domain. Mg(2+)-binding residues include Asp296 and Asp339. Residues Cys397 and Cys400 each coordinate Zn(2+). The segment at 650-687 (PIKLTETMEESEVNAASTANRRRRRRSSASDSDTGEDS) is disordered. The C4 Arg-rich motif, necessary and sufficient to confer PNPase binding on another protein motif lies at 670–678 (RRRRRRSSA).

It belongs to the RNase E/G family. May form homodimers or higher order multimers. Interacts with polynucleotide phosphorylase (PNPase, pnp) via the C4 Arg-rich motif (residues 670-678). A homotetramer formed by a dimer of dimers. Mg(2+) serves as cofactor. The cofactor is Zn(2+).

The protein resides in the cytoplasm. The catalysed reaction is Endonucleolytic cleavage of single-stranded RNA in A- and U-rich regions.. Its function is as follows. Endoribonuclease that plays a central role in rRNA and tRNA processing and mRNA decay. Has been shown to act on 9S rRNA (the precursor of 5S rRNA). This chain is Ribonuclease E, found in Nostoc sp. (strain PCC 7120 / SAG 25.82 / UTEX 2576).